Consider the following 507-residue polypeptide: ATP synthase subunit alpha, chloroplastic (507 aa).

170–177 is an ATP binding site; the sequence is GDRQTGKT.

The protein belongs to the ATPase alpha/beta chains family. F-type ATPases have 2 components, CF(1) - the catalytic core - and CF(0) - the membrane proton channel. CF(1) has five subunits: alpha(3), beta(3), gamma(1), delta(1), epsilon(1). CF(0) has four main subunits: a, b, b' and c.

The protein localises to the plastid. The protein resides in the chloroplast thylakoid membrane. The enzyme catalyses ATP + H2O + 4 H(+)(in) = ADP + phosphate + 5 H(+)(out). Its function is as follows. Produces ATP from ADP in the presence of a proton gradient across the membrane. The alpha chain is a regulatory subunit. In Amborella trichopoda, this protein is ATP synthase subunit alpha, chloroplastic.